Reading from the N-terminus, the 266-residue chain is 2-hydroxyisocaproyl-CoA dehydratase activator (266 aa).

Residues 10–14 (STASK) and 102–104 (GQD) each bind ATP. A [4Fe-4S] cluster-binding site is contributed by cysteine 125. Aspartate 134 contributes to the ATP binding site. Cysteine 164 contacts [4Fe-4S] cluster. ATP contacts are provided by glycine 215 and glutamine 241.

This sequence belongs to the HadI activator family. Homodimer. Requires [4Fe-4S] cluster as cofactor.

In terms of biological role, involved in the reductive branch of L-leucine fermentation. Required for the activation of (R)-2-hydroxyisocaproyl-CoA dehydratase. The reduced activator transfers one electron to the dehydratase concomitant with hydrolysis of ATP. This protein is extremely sensitive towards oxygen. In Clostridioides difficile (Peptoclostridium difficile), this protein is 2-hydroxyisocaproyl-CoA dehydratase activator.